Reading from the N-terminus, the 873-residue chain is Leucine--tRNA ligase (873 aa).

Positions 48 to 58 match the 'HIGH' region motif; sequence PYPSGKLHMGH. The 'KMSKS' region motif lies at 636–640; that stretch reads KMSKS. K639 provides a ligand contact to ATP.

The protein belongs to the class-I aminoacyl-tRNA synthetase family.

The protein resides in the cytoplasm. The catalysed reaction is tRNA(Leu) + L-leucine + ATP = L-leucyl-tRNA(Leu) + AMP + diphosphate. This chain is Leucine--tRNA ligase, found in Cupriavidus metallidurans (strain ATCC 43123 / DSM 2839 / NBRC 102507 / CH34) (Ralstonia metallidurans).